A 93-amino-acid polypeptide reads, in one-letter code: uncharacterized protein (93 aa).

Positions 41 to 62 (RSANRIPTTSSTSTSGTIPTTT) are disordered. Positions 46-62 (IPTTSSTSTSGTIPTTT) are enriched in low complexity.

This is an uncharacterized protein from Dictyostelium discoideum (Social amoeba).